The chain runs to 347 residues: Aspartate carbamoyltransferase catalytic subunit (347 aa).

Residues Arg-75 and Thr-76 each coordinate carbamoyl phosphate. Lys-103 is a binding site for L-aspartate. The carbamoyl phosphate site is built by Arg-125, His-153, and Gln-156. The L-aspartate site is built by Arg-193 and Arg-247. 2 residues coordinate carbamoyl phosphate: Gly-288 and Pro-289.

It belongs to the aspartate/ornithine carbamoyltransferase superfamily. ATCase family. As to quaternary structure, heterododecamer (2C3:3R2) of six catalytic PyrB chains organized as two trimers (C3), and six regulatory PyrI chains organized as three dimers (R2).

It catalyses the reaction carbamoyl phosphate + L-aspartate = N-carbamoyl-L-aspartate + phosphate + H(+). It functions in the pathway pyrimidine metabolism; UMP biosynthesis via de novo pathway; (S)-dihydroorotate from bicarbonate: step 2/3. In terms of biological role, catalyzes the condensation of carbamoyl phosphate and aspartate to form carbamoyl aspartate and inorganic phosphate, the committed step in the de novo pyrimidine nucleotide biosynthesis pathway. In Erythrobacter litoralis (strain HTCC2594), this protein is Aspartate carbamoyltransferase catalytic subunit.